A 60-amino-acid chain; its full sequence is UPF0434 protein YcaR (60 aa).

The protein belongs to the UPF0434 family.

In Escherichia fergusonii (strain ATCC 35469 / DSM 13698 / CCUG 18766 / IAM 14443 / JCM 21226 / LMG 7866 / NBRC 102419 / NCTC 12128 / CDC 0568-73), this protein is UPF0434 protein YcaR.